Consider the following 521-residue polypeptide: Envelope glycoprotein C homolog (521 aa).

The N-terminal stretch at 1–21 (MGPLGRAWLIAAIFAWALLSA) is a signal peptide. Residues 22-475 (RRGLAEEAEA…DASPGLIGSP (454 aa)) are Virion surface-facing. Residues 24–138 (GLAEEAEASP…PSKAPPKERK (115 aa)) form a disordered region. The span at 41 to 54 (PTETESSAGTTGAT) shows a compositional bias: low complexity. Residues 66-76 (EDSTPGATTPV) are compositionally biased toward polar residues. A glycan (N-linked (GlcNAc...) asparagine; by host) is linked at N111. A disulfide bridge connects residues C142 and C159. The Ig-like V-type domain maps to 155–227 (LYVHCGVADN…LGDNYIFPSP (73 aa)). N-linked (GlcNAc...) asparagine; by host glycans are attached at residues N164 and N208. Cystine bridges form between C290–C351, C390–C447, and C394–C421. The Ig-like C2-type domain occupies 386–451 (GEAVCEARCV…PVDYTCTATG (66 aa)). A helical membrane pass occupies residues 476-496 (VLVSVVAVACGLGAVGLLLVA). At 497–521 (ASCLRRKARVIQPGLTRARALGSAP) the chain is on the cytoplasmic side.

Belongs to the herpesviridae glycoprotein C family. As to quaternary structure, interacts with host complement component C3; this interaction inhibits host immune response by disregulating complement cascade.

Its subcellular location is the virion membrane. Functionally, essential for the initial attachment to heparan sulfate moieties of the host cell surface proteoglycans. Plays also a role in host immune evasion by inhibiting the host complement cascade activation. In Bovine herpesvirus 1.1 (strain Cooper) (BoHV-1), this protein is Envelope glycoprotein C homolog (gC).